Here is a 422-residue protein sequence, read N- to C-terminus: MNKTHLTDQKFSDFALHPLVIKAIENQGFYHCTPIQALSFPITLAGRDVAAQAQTGTGKTLAFLASVFNYLLTNAADETRQCEQPRALIMVPTRELAIQIYTDAETLSQFTSLKMGLAYGGDGYDKQLKILESGVDILIGTPGRIIDYAKQNFIHLNALQVIVLDEADRMYDLGFIKDIRWLFRRMPPAEKRLNMLFSATLSYRVRELSFEQMNHPEYIEVEPLQKIGSQIQEELFYPSNEDKMRLLQTLIEEEWPDRCIIFANTKQRCEDIWGHLVADGHRVGLLTGDVAQRKRIQILDDFSKGYLDILVATDVAARGLHIPKVTHVFNYDLPENVEDYIHRIGRTGRAGEKGYSISLACEAFASHLSTIEACTGHRIPTSEYNKEALLTDLPQPKRLQRHHRHYAGSRNQGASRKPRSPQ.

Residues 9-37 (QKFSDFALHPLVIKAIENQGFYHCTPIQA) carry the Q motif motif. In terms of domain architecture, Helicase ATP-binding spans 40-219 (FPITLAGRDV…FEQMNHPEYI (180 aa)). 53–60 (AQTGTGKT) serves as a coordination point for ATP. The short motif at 165–168 (DEAD) is the DEAD box element. Residues 245 to 390 (RLLQTLIEEE…TSEYNKEALL (146 aa)) form the Helicase C-terminal domain. Residues 394-422 (PQPKRLQRHHRHYAGSRNQGASRKPRSPQ) are disordered. The segment covering 398 to 407 (RLQRHHRHYA) has biased composition (basic residues).

It belongs to the DEAD box helicase family. RhlB subfamily. In terms of assembly, component of the RNA degradosome, which is a multiprotein complex involved in RNA processing and mRNA degradation.

The protein resides in the cytoplasm. It catalyses the reaction ATP + H2O = ADP + phosphate + H(+). In terms of biological role, DEAD-box RNA helicase involved in RNA degradation. Has RNA-dependent ATPase activity and unwinds double-stranded RNA. This chain is ATP-dependent RNA helicase RhlB, found in Hamiltonella defensa subsp. Acyrthosiphon pisum (strain 5AT).